Reading from the N-terminus, the 443-residue chain is MEKTYHFTGIKGSGMSALALMLHQMGKKVQGSDSTDYFFTQRGLEQADVPLLPFDEKNIKPEFELIAGNAFRDDNNVEIAFAHKNGFPFKRYHEFLGHFMEDFTSIGVAGAHGKTSTTGMLAHVMSNIVDTSYLIGDGTGRGIEGSEYFVFESDEYERHFMPYHPEYTIMTNIDFDHPDYFEGIEDVTSAFQDYANNIKKGIFAYGEDVNLRKLTAKAPIYYYGFEANDDYRAENLVRSTRGSSFDAYFRGEKIGHFVVPAYGKHNVLNALSVVAVCHNLGLDMTEVADHLLTFRGVKRRFTEKKVGETVIIDDFAHHPTEIEATLDAARQKYPDREIVAVFQPHTFTRTIAFADEFAEVLDHADTVYLAQIYGSAREVDHHEITAQDLADKVRKPAKVIDLDNVSPLLDHDRGVYVFMGAGNIQKYELAFEKLLSQVSTNLQ.

110–116 (GAHGKTS) contributes to the ATP binding site.

It belongs to the MurCDEF family.

Its subcellular location is the cytoplasm. It carries out the reaction UDP-N-acetyl-alpha-D-muramate + L-alanine + ATP = UDP-N-acetyl-alpha-D-muramoyl-L-alanine + ADP + phosphate + H(+). It participates in cell wall biogenesis; peptidoglycan biosynthesis. Functionally, cell wall formation. The sequence is that of UDP-N-acetylmuramate--L-alanine ligase from Lactococcus lactis subsp. lactis (strain IL1403) (Streptococcus lactis).